We begin with the raw amino-acid sequence, 207 residues long: MTKLSKRQQQILDFIKKEVKTKGYPPSVREIGEAVGLASSSTVHGHLARLESKGYIRRDPTKPRAIEILDADFSASNQTDDVISVPIIGKVTAGQPITAIENIEDYFPLPKRLVSSEDHVFMLEVMGDSMIEAGILDGDYVIVRQQQSADNGDIVVAMTEDNEATVKRFFKEKDHIRLQPENSNLEPIIVRDCTILGKVIGVYRVIH.

Residues 28–48 constitute a DNA-binding region (H-T-H motif); sequence VREIGEAVGLASSSTVHGHLA. Active-site for autocatalytic cleavage activity residues include S129 and K167.

This sequence belongs to the peptidase S24 family. As to quaternary structure, homodimer.

The enzyme catalyses Hydrolysis of Ala-|-Gly bond in repressor LexA.. Its function is as follows. Represses a number of genes involved in the response to DNA damage (SOS response), including recA and lexA. In the presence of single-stranded DNA, RecA interacts with LexA causing an autocatalytic cleavage which disrupts the DNA-binding part of LexA, leading to derepression of the SOS regulon and eventually DNA repair. The chain is LexA repressor from Geobacillus sp. (strain WCH70).